Here is an 88-residue protein sequence, read N- to C-terminus: Phosphocarrier protein HPr (88 aa).

Residues 1–88 (MEQKSYVIID…DILSKEGLTK (88 aa)) enclose the HPr domain. The active-site Pros-phosphohistidine intermediate is H15. Position 46 is a phosphoserine; by HPrK/P (S46).

It belongs to the HPr family.

The protein localises to the cytoplasm. Phosphorylation on Ser-46 inhibits the phosphoryl transfer from enzyme I to HPr. In terms of biological role, general (non sugar-specific) component of the phosphoenolpyruvate-dependent sugar phosphotransferase system (sugar PTS). This major carbohydrate active-transport system catalyzes the phosphorylation of incoming sugar substrates concomitantly with their translocation across the cell membrane. The phosphoryl group from phosphoenolpyruvate (PEP) is transferred to the phosphoryl carrier protein HPr by enzyme I. Phospho-HPr then transfers it to the PTS EIIA domain. This is Phosphocarrier protein HPr (ptsH) from Staphylococcus xylosus.